A 389-amino-acid polypeptide reads, in one-letter code: Large envelope protein (389 aa).

M1 carries the N-acetylmethionine modification. A lipid anchor (N-myristoyl glycine; by host) is attached at G2. The pre-S1 stretch occupies residues 2-108 (GTNLSVPNPL…PPLRDTHPQA (107 aa)). The pre-S stretch occupies residues 2-163 (GTNLSVPNPL…LSKTGDPVPN (162 aa)). Residues 2–170 (GTNLSVPNPL…VPNMENIASG (169 aa)) lie on the Virion surface; in external conformation side of the membrane. The Intravirion; in internal conformation segment spans residues 2–242 (GTNLSVPNPL…PGYRWMCLRR (241 aa)). A disordered region spans residues 74–103 (LTTVPAAPPPASTNRQSGRQPTPLSPPLRD). Polar residues predominate over residues 85–95 (STNRQSGRQPT). Residues 109–163 (MQWNSTTFHQTLQDPGVRALYFPAGGSSSGTVSPAQNTVSAISSILSKTGDPVPN) form a pre-S2 region. The chain crosses the membrane as a helical span at residues 171 to 191 (LLGPLLVLQAGFFLLTKILTI). At 192–242 (PQSLDSWWTSLNFLGGTPVCLGQNSQSQISSHSPTCCPPICPGYRWMCLRR) the chain is on the intravirion; in external conformation side. A helical transmembrane segment spans residues 243 to 263 (FIIFLCILLLCLIFLLVLLDY). Topologically, residues 264 to 337 (QGMLPVCPLI…WASVRFSWLS (74 aa)) are virion surface. N309 carries N-linked (GlcNAc...) asparagine; by host glycosylation. The chain crosses the membrane as a helical span at residues 338-358 (LLVPFVQWFVGLSPTVWLSVI). Topologically, residues 359 to 364 (WMIWFW) are intravirion. Residues 365–387 (GPSLYNILSPFMPLLPIFFCLWV) traverse the membrane as a helical segment. At 388–389 (YI) the chain is on the virion surface side.

Belongs to the orthohepadnavirus major surface antigen family. Interacts (via its myristoylated pre-S1 region) with the host SLC10A1/NTCP; this interaction is essential for viral entry. In terms of assembly, in its internal form (Li-HBsAg), interacts with the capsid protein and with the isoform S. Interacts with host chaperone CANX. As to quaternary structure, associates with host chaperone CANX through its pre-S2 N glycan; this association may be essential for isoform M proper secretion. Interacts with isoform L. Interacts with the antigens of satellite virus HDV (HDVAgs); this interaction is required for encapsidation of HDV genomic RNA. In terms of processing, isoform M is N-terminally acetylated by host at a ratio of 90%, and N-glycosylated by host at the pre-S2 region. Post-translationally, myristoylated; this modification is essential for its interaction with the host protein SLC10A1/NTCP.

It localises to the virion membrane. Functionally, the large envelope protein exists in two topological conformations, one which is termed 'external' or Le-HBsAg and the other 'internal' or Li-HBsAg. In its external conformation the protein attaches the virus to cell receptors and thereby initiating infection. This interaction determines the species specificity and liver tropism. This attachment induces virion internalization predominantly through caveolin-mediated endocytosis. The large envelope protein also assures fusion between virion membrane and endosomal membrane. In its internal conformation the protein plays a role in virion morphogenesis and mediates the contact with the nucleocapsid like a matrix protein. In terms of biological role, the middle envelope protein plays an important role in the budding of the virion. It is involved in the induction of budding in a nucleocapsid independent way. In this process the majority of envelope proteins bud to form subviral lipoprotein particles of 22 nm of diameter that do not contain a nucleocapsid. In Hepatitis B virus genotype B/C subtype adw (isolate Okinawa/pODW282/1998) (HBV-B), this protein is Large envelope protein.